The following is a 471-amino-acid chain: F-box only protein 3 (471 aa).

The F-box domain maps to 10 to 56; that stretch reads PLTLESLPTDPLLLILSFLDYRDLINCCYVSRRLSQLSSHDPLWRRH. One can recognise an ApaG domain in the interval 278 to 408; the sequence is VATTGDITVS…FHMACPTFRV (131 aa). Acidic residues predominate over residues 419 to 451; that stretch reads EYEEMEEEEEEEEEEDEDDDSADMDESDEDDEE. The disordered stretch occupies residues 419 to 455; the sequence is EYEEMEEEEEEEEEEDEDDDSADMDESDEDDEEERRR.

In terms of assembly, part of a SCF (SKP1-cullin-F-box) protein ligase complex SCF(FBXO3) consisting of FBXO3, SKP1, CUL1 and RBX1. Interacts with PML, interaction is direct and takes place either alone or within the SCF complex. (Microbial infection) Interacts (via ApaG domain) with Rift valley fever virus NSs helical filament; this interaction forms a filamentous E3 which mediates degradation of TFIIH complex through interaction with GT2H1.

Its subcellular location is the nucleus. The protein operates within protein modification; protein ubiquitination. Substrate recognition component of the SCF (SKP1-CUL1-F-box protein)-type E3 ubiquitin ligase complex, SCF(FBXO3), which mediates the ubiquitination and subsequent proteasomal degradation of target proteins. Mediates the ubiquitination of HIPK2 and probably that of EP300, leading to rapid degradation by the proteasome. In the presence of PML, HIPK2 ubiquitination still occurs, but degradation is prevented. PML, HIPK2 and FBXO3 may act synergically to activate p53/TP53-dependent transactivation. The SCF(FBXO3) also acts as a regulator of inflammation by mediating ubiquitination and degradation of FBXL2 in response to lipopolysaccharide (LPS). The SCF(FBXO3) complex specifically recognizes FBXL2 phosphorylated at 'Thr-404' and promotes its ubiquitination. Its function is as follows. (Microbial infection) Associates with the Rift valley fever virus NSs to form a remodeled E3 ligase that triggers efficient proteasomal degradation of targeted proteins. The filamentous E3 ligase targets the TFIIH complex leading to robust inhibition of antiviral immunity and enhances viral pathogenesis. The polypeptide is F-box only protein 3 (Homo sapiens (Human)).